We begin with the raw amino-acid sequence, 71 residues long: Long neurotoxin 1 (71 aa).

Cystine bridges form between Cys-3/Cys-20, Cys-14/Cys-41, Cys-26/Cys-30, Cys-45/Cys-56, and Cys-57/Cys-62.

The protein belongs to the three-finger toxin family. Long-chain subfamily. Type II alpha-neurotoxin sub-subfamily. Expressed by the venom gland.

Its subcellular location is the secreted. Its function is as follows. Binds with high affinity to muscular (alpha-1/CHRNA1) and neuronal (alpha-7/CHRNA7) nicotinic acetylcholine receptor (nAChR) and inhibits acetylcholine from binding to the receptor, thereby impairing neuromuscular and neuronal transmission. In Naja haje haje (Egyptian cobra), this protein is Long neurotoxin 1.